A 521-amino-acid polypeptide reads, in one-letter code: Protein nucleotidyltransferase YdiU (521 aa).

Residues Gly109, Gly111, Arg112, Lys131, Asp143, Gly144, Arg194, and Arg201 each coordinate ATP. The active-site Proton acceptor is Asp270. Mg(2+) contacts are provided by Asn271 and Asp280. An ATP-binding site is contributed by Asp280.

Belongs to the SELO family. It depends on Mg(2+) as a cofactor. Mn(2+) serves as cofactor.

The catalysed reaction is L-seryl-[protein] + ATP = 3-O-(5'-adenylyl)-L-seryl-[protein] + diphosphate. It carries out the reaction L-threonyl-[protein] + ATP = 3-O-(5'-adenylyl)-L-threonyl-[protein] + diphosphate. It catalyses the reaction L-tyrosyl-[protein] + ATP = O-(5'-adenylyl)-L-tyrosyl-[protein] + diphosphate. The enzyme catalyses L-histidyl-[protein] + UTP = N(tele)-(5'-uridylyl)-L-histidyl-[protein] + diphosphate. The catalysed reaction is L-seryl-[protein] + UTP = O-(5'-uridylyl)-L-seryl-[protein] + diphosphate. It carries out the reaction L-tyrosyl-[protein] + UTP = O-(5'-uridylyl)-L-tyrosyl-[protein] + diphosphate. In terms of biological role, nucleotidyltransferase involved in the post-translational modification of proteins. It can catalyze the addition of adenosine monophosphate (AMP) or uridine monophosphate (UMP) to a protein, resulting in modifications known as AMPylation and UMPylation. This Burkholderia mallei (strain ATCC 23344) protein is Protein nucleotidyltransferase YdiU.